The following is a 247-amino-acid chain: 1-(5-phosphoribosyl)-5-[(5-phosphoribosylamino)methylideneamino] imidazole-4-carboxamide isomerase (247 aa).

The Proton acceptor role is filled by aspartate 8. Aspartate 131 serves as the catalytic Proton donor.

This sequence belongs to the HisA/HisF family.

The protein localises to the cytoplasm. It carries out the reaction 1-(5-phospho-beta-D-ribosyl)-5-[(5-phospho-beta-D-ribosylamino)methylideneamino]imidazole-4-carboxamide = 5-[(5-phospho-1-deoxy-D-ribulos-1-ylimino)methylamino]-1-(5-phospho-beta-D-ribosyl)imidazole-4-carboxamide. It functions in the pathway amino-acid biosynthesis; L-histidine biosynthesis; L-histidine from 5-phospho-alpha-D-ribose 1-diphosphate: step 4/9. The sequence is that of 1-(5-phosphoribosyl)-5-[(5-phosphoribosylamino)methylideneamino] imidazole-4-carboxamide isomerase from Acidovorax sp. (strain JS42).